We begin with the raw amino-acid sequence, 197 residues long: Protocatechuate 3,4-dioxygenase alpha chain (197 aa).

3,4-dihydroxybenzoate is bound at residue Arg130.

It belongs to the intradiol ring-cleavage dioxygenase family. As to quaternary structure, the enzyme is an oligomer of 12 copies of the alpha and beta chains. It depends on Fe(3+) as a cofactor.

It carries out the reaction 3,4-dihydroxybenzoate + O2 = 3-carboxy-cis,cis-muconate + 2 H(+). The protein operates within aromatic compound metabolism; beta-ketoadipate pathway; 3-carboxy-cis,cis-muconate from 3,4-dihydroxybenzoate: step 1/1. In terms of biological role, plays an essential role in the utilization of numerous aromatic and hydroaromatic compounds via the beta-ketoadipate pathway. This chain is Protocatechuate 3,4-dioxygenase alpha chain (pcaG), found in Burkholderia cepacia (Pseudomonas cepacia).